Consider the following 202-residue polypeptide: Nucleoside triphosphate pyrophosphatase (202 aa).

The active-site Proton acceptor is the Asp-79.

It belongs to the Maf family. Requires a divalent metal cation as cofactor.

Its subcellular location is the cytoplasm. The enzyme catalyses a ribonucleoside 5'-triphosphate + H2O = a ribonucleoside 5'-phosphate + diphosphate + H(+). The catalysed reaction is a 2'-deoxyribonucleoside 5'-triphosphate + H2O = a 2'-deoxyribonucleoside 5'-phosphate + diphosphate + H(+). Functionally, nucleoside triphosphate pyrophosphatase. May have a dual role in cell division arrest and in preventing the incorporation of modified nucleotides into cellular nucleic acids. The chain is Nucleoside triphosphate pyrophosphatase from Bradyrhizobium diazoefficiens (strain JCM 10833 / BCRC 13528 / IAM 13628 / NBRC 14792 / USDA 110).